Here is a 522-residue protein sequence, read N- to C-terminus: Cytochrome P450 4F4 (522 aa).

The next 2 helical transmembrane spans lie at 15-35 and 87-107; these read TSLP…VRVL and GFMT…PDVI. Glu-328 and Cys-468 together coordinate heme.

This sequence belongs to the cytochrome P450 family. Requires heme as cofactor. As to expression, expressed in hepatocytes. High expression in liver and kidney. Lower expression in brain.

The protein localises to the endoplasmic reticulum membrane. It localises to the microsome membrane. The enzyme catalyses (5Z,8Z,11Z,14Z)-eicosatetraenoate + reduced [NADPH--hemoprotein reductase] + O2 = 20-hydroxy-(5Z,8Z,11Z,14Z)-eicosatetraenoate + oxidized [NADPH--hemoprotein reductase] + H2O + H(+). It carries out the reaction leukotriene B4 + reduced [NADPH--hemoprotein reductase] + O2 = 20-hydroxy-leukotriene B4 + oxidized [NADPH--hemoprotein reductase] + H2O + H(+). It catalyses the reaction 6-trans-leukotriene B4 + reduced [NADPH--hemoprotein reductase] + O2 = 20-hydroxy-6-trans-leukotriene B4 + oxidized [NADPH--hemoprotein reductase] + H2O + H(+). The catalysed reaction is prostaglandin A1 + reduced [NADPH--hemoprotein reductase] + O2 = 20-hydroxy prostaglandin A1 + oxidized [NADPH--hemoprotein reductase] + H2O + H(+). The enzyme catalyses prostaglandin E1 + reduced [NADPH--hemoprotein reductase] + O2 = 20-hydroxy prostaglandin E1 + oxidized [NADPH--hemoprotein reductase] + H2O + H(+). Its function is as follows. A cytochrome P450 monooxygenase involved in the metabolism of arachidonic acid and its oxygenated derivatives. Mechanistically, uses molecular oxygen inserting one oxygen atom into a substrate, and reducing the second into a water molecule, with two electrons provided by NADPH via cytochrome P450 reductase (CPR; NADPH-ferrihemoprotein reductase). Participates in the conversion of arachidonic acid to omega-hydroxyeicosatetraenoic acid (20-HETE), a signaling molecule acting both as vasoconstrictive and natriuretic with overall effect on arterial blood pressure. Hydroxylates the terminal carbon (omega-hydroxylation) of inflammatory lipid mediators, including prostaglandin (PG) A1, PGE1 and leukotriene B4 (LTB4), and may play a role in inactivation of these oxylipins during the resolution of inflammation. The polypeptide is Cytochrome P450 4F4 (Rattus norvegicus (Rat)).